Reading from the N-terminus, the 61-residue chain is Ferredoxin-2 (61 aa).

2 consecutive 4Fe-4S ferredoxin-type domains span residues histidine 2 to aspartate 27 and glutamate 28 to valine 61. [4Fe-4S] cluster contacts are provided by cysteine 8, cysteine 11, cysteine 14, cysteine 18, cysteine 37, cysteine 40, cysteine 49, and cysteine 53.

The cofactor is [4Fe-4S] cluster.

In terms of biological role, ferredoxins are iron-sulfur proteins that transfer electrons in a wide variety of metabolic reactions. The chain is Ferredoxin-2 from Chlorobium limicola.